Consider the following 466-residue polypeptide: Phytase A (466 aa).

Positions 1–19 (MAVLSVLLPITFLLSSVTG) are cleaved as a signal peptide. Cysteines 30 and 39 form a disulfide. Gln49, Tyr50, Arg80, His81, Arg84, and Thr87 together coordinate 1D-myo-inositol hexakisphosphate. 4 cysteine pairs are disulfide-bonded: Cys70–Cys413, Cys214–Cys464, Cys263–Cys281, and Cys435–Cys443. Catalysis depends on His81, which acts as the Nucleophile. Residues Asn104 and Asn119 are each glycosylated (N-linked (GlcNAc...) asparagine). 1D-myo-inositol hexakisphosphate is bound at residue Arg164. Residues Asn206 and Asn219 are each glycosylated (N-linked (GlcNAc...) asparagine). Residue Lys300 coordinates 1D-myo-inositol hexakisphosphate. Residues Asn338 and Asn351 are each glycosylated (N-linked (GlcNAc...) asparagine). The 1D-myo-inositol hexakisphosphate site is built by His360 and Asp361. N-linked (GlcNAc...) asparagine glycosylation is present at Asn375.

Belongs to the histidine acid phosphatase family. In terms of assembly, monomer.

Its subcellular location is the secreted. It catalyses the reaction 1D-myo-inositol hexakisphosphate + H2O = 1D-myo-inositol 1,2,4,5,6-pentakisphosphate + phosphate. The enzyme catalyses 1D-myo-inositol 1,2,4,5,6-pentakisphosphate + H2O = 1D-myo-inositol 1,2,5,6-tetrakisphosphate + phosphate. It carries out the reaction 1D-myo-inositol 1,2,5,6-tetrakisphosphate + H2O = 1D-myo-inositol 1,2,6-trisphosphate + phosphate. The catalysed reaction is 1D-myo-inositol 1,2,6-trisphosphate + H2O = 1D-myo-inositol 1,2-bisphosphate + phosphate. It catalyses the reaction 1D-myo-inositol 1,2-bisphosphate + H2O = 1D-myo-inositol 2-phosphate + phosphate. Functionally, catalyzes the phosphate monoester hydrolysis of phytic acid (myo-inositol hexakisphosphate), which results in the stepwise formation of myo-inositol pentakis-, tetrakis-, tris-, bis-, and monophosphates, as well as the liberation of inorganic phosphate. Myo-inositol 2-monophosphate is the end product. The protein is Phytase A (phyA) of Aspergillus oryzae (strain ATCC 42149 / RIB 40) (Yellow koji mold).